A 939-amino-acid polypeptide reads, in one-letter code: Protein translocase subunit SecA 1 (939 aa).

ATP is bound by residues glutamine 85, 103-107 (GEGKT), and aspartate 504. The segment at 848–939 (EVPVEDEKPS…QSKGGRRRKK (92 aa)) is disordered. Composition is skewed to basic and acidic residues over residues 852–863 (EDEKPSLEKEDA), 872–889 (PEIR…DRLH), and 914–925 (PVRSEADGLTRA). Residues 926 to 939 (ERRKQSKGGRRRKK) show a composition bias toward basic residues.

It belongs to the SecA family. Monomer and homodimer. Part of the essential Sec protein translocation apparatus which comprises SecA, SecYEG and auxiliary proteins SecDF. Other proteins may also be involved.

It localises to the cell membrane. The protein localises to the cytoplasm. It carries out the reaction ATP + H2O + cellular proteinSide 1 = ADP + phosphate + cellular proteinSide 2.. Its function is as follows. Part of the Sec protein translocase complex. Interacts with the SecYEG preprotein conducting channel. Has a central role in coupling the hydrolysis of ATP to the transfer of proteins into and across the cell membrane, serving as an ATP-driven molecular motor driving the stepwise translocation of polypeptide chains across the membrane. This chain is Protein translocase subunit SecA 1, found in Streptomyces avermitilis (strain ATCC 31267 / DSM 46492 / JCM 5070 / NBRC 14893 / NCIMB 12804 / NRRL 8165 / MA-4680).